A 143-amino-acid chain; its full sequence is Transcriptional regulator MraZ (143 aa).

SpoVT-AbrB domains follow at residues 5-47 and 76-119; these read TYTP…PKEE and ADEQ…DAQA.

It belongs to the MraZ family. As to quaternary structure, forms oligomers.

The protein localises to the cytoplasm. Its subcellular location is the nucleoid. In Corynebacterium glutamicum (strain R), this protein is Transcriptional regulator MraZ.